The primary structure comprises 280 residues: Alpha-aminoadipate--LysW ligase LysX (280 aa).

Residues lysine 89, lysine 129, 133–139 (GSWGRLL), 169–180 (QEYVEKPGRDIR), arginine 194, and asparagine 202 contribute to the ATP site. Positions 93–276 (SVALAKAGLP…IPGEILKYAW (184 aa)) constitute an ATP-grasp domain. Residues aspartate 237, glutamate 249, and asparagine 251 each coordinate Mg(2+). Positions 258–259 (NS) match the N-[TS] motif that is essential for LysX substrate specificity motif.

Belongs to the RimK family. LysX subfamily. Homodimer. It depends on Mg(2+) as a cofactor.

It carries out the reaction [amino-group carrier protein]-C-terminal-L-glutamate + L-2-aminoadipate + ATP = [amino-group carrier protein]-C-terminal-N-(1,4-dicarboxybutan-1-yl)-L-glutamine + ADP + phosphate + H(+). It participates in amino-acid biosynthesis; L-lysine biosynthesis via AAA pathway; L-lysine from L-alpha-aminoadipate (Thermus route): step 1/5. Functionally, catalyzes the ATP-dependent formation of a covalent bond between the amino group of alpha-aminoadipate (AAA) and the gamma-carboxyl group of the C-terminal glutamate residue in LysW. This Thermus thermophilus (strain ATCC 27634 / DSM 579 / HB8) protein is Alpha-aminoadipate--LysW ligase LysX (lysX).